The following is a 515-amino-acid chain: Maturase K (515 aa).

It belongs to the intron maturase 2 family. MatK subfamily.

The protein resides in the plastid. Its subcellular location is the chloroplast. Functionally, usually encoded in the trnK tRNA gene intron. Probably assists in splicing its own and other chloroplast group II introns. This Pinus coulteri (Coulter pine) protein is Maturase K.